Here is a 349-residue protein sequence, read N- to C-terminus: Probable esterase Cgl0839 (349 aa).

Residues 60 to 329 enclose the AB hydrolase-1 domain; sequence GTHQTWFQQY…EDIAGHLGLF (270 aa). Ser142 serves as the catalytic Nucleophile. Catalysis depends on residues Asp296 and His325.

The protein belongs to the AB hydrolase superfamily. Acetyl esterase family. As to quaternary structure, homodimer.

Functionally, esterase that catalyzes the hydrolysis of 4-nitrophenyl acetate in vitro. This Corynebacterium glutamicum (strain ATCC 13032 / DSM 20300 / JCM 1318 / BCRC 11384 / CCUG 27702 / LMG 3730 / NBRC 12168 / NCIMB 10025 / NRRL B-2784 / 534) protein is Probable esterase Cgl0839.